We begin with the raw amino-acid sequence, 121 residues long: Large ribosomal subunit protein uL18 (121 aa).

It belongs to the universal ribosomal protein uL18 family. As to quaternary structure, part of the 50S ribosomal subunit; part of the 5S rRNA/L5/L18/L25 subcomplex. Contacts the 5S and 23S rRNAs.

Its function is as follows. This is one of the proteins that bind and probably mediate the attachment of the 5S RNA into the large ribosomal subunit, where it forms part of the central protuberance. The protein is Large ribosomal subunit protein uL18 of Anaplasma phagocytophilum (strain HZ).